The primary structure comprises 511 residues: MVKQIMIQGTASDAGKSVLVAGLCRLFKNKGKRVVPFKSQNMSLNSFITATGDEMGRAQVFQAEAAGVFPDVRMNPVLLKPTNDRQSQVIFMGAILDNMDAVTYHDFKQTLIPKIQAVYQSLADENDIIVLEGAGSPAEINLNDRDIVNMGMAKMVDAPVVLVADIDKGGVFASIYGTIMLLNEEERARIKGVIINKFRGDVALLQPGIDMIEELTNVPVIGVIPYANLQLEEEDSVSLNGKNYAPDSNALLDIAIICLPRISNFTDFHSLEIQPEISLRYIRNLADFGKPDLVIIPGSKNTLEDMAFLEESGLKKAIQNFAENAGKVIGICGGYQMLGQKMLDPDQVESKQLEIAGLGLLDTETIFLDQKRTTQITGVTHSGEAVEGYEIHMGETKRGESTSPFCKIKAVNGNEETHQDGAISANKNIIGTYIHGIFDNDVFLGNLFDELLTRKNQSIYPHEIINLKEHKEQEYDKLAALLEANIQMDQLEKIMKGEKICVSTQKPAIKE.

Residues 251 to 443 (LLDIAIICLP…IHGIFDNDVF (193 aa)) form the GATase cobBQ-type domain. Cys332 (nucleophile) is an active-site residue. His435 is an active-site residue.

The protein belongs to the CobB/CobQ family. CobQ subfamily.

The protein operates within cofactor biosynthesis; adenosylcobalamin biosynthesis. Catalyzes amidations at positions B, D, E, and G on adenosylcobyrinic A,C-diamide. NH(2) groups are provided by glutamine, and one molecule of ATP is hydrogenolyzed for each amidation. This Listeria monocytogenes serovar 1/2a (strain ATCC BAA-679 / EGD-e) protein is Cobyric acid synthase.